The sequence spans 475 residues: FAD-dependent monooxygenase janM (475 aa).

Residues 8-24 (VIIVGGSIGGLTLAHCL) traverse the membrane as a helical segment. Residues Glu35, Gly49, and Arg108 each coordinate FAD. Asn147 carries an N-linked (GlcNAc...) asparagine glycan. Residues Asp299 and Ala312 each contribute to the FAD site. Residues 432-451 (GWRFHAMLCILMLAILYTWV) traverse the membrane as a helical segment.

This sequence belongs to the paxM FAD-dependent monooxygenase family. FAD serves as cofactor.

Its subcellular location is the membrane. It participates in secondary metabolite biosynthesis. Functionally, FAD-dependent monooxygenase; part of the gene cluster that mediates the biosynthesis of the indole diterpenes janthitremanes such as shearinine K or shearinine A. The geranylgeranyl diphosphate (GGPP) synthase janG catalyzes the first step in janthitremane biosynthesis via conversion of farnesyl pyrophosphate and isopentyl pyrophosphate into geranylgeranyl pyrophosphate (GGPP). Condensation of indole-3-glycerol phosphate with GGPP by the prenyl transferase janC then forms 3-geranylgeranylindole (3-GGI). Epoxidation by the FAD-dependent monooxygenase janM leads to a epoxidized-GGI that is substrate of the terpene cyclase janB for cyclization to yield paspaline. Paspaline is subsequently converted to 13-desoxypaspaline by the cytochrome P450 monooxygenase janP, via beta-PC-M6 in a series of alpha-face oxidations. The cytochrome P450 monooxygenase janQ is proposed to carry out sequential beta-face oxidation steps at C-7 and C-13 of 13-desoxypaspaline to form paspalicine and paspalinine respectively. The indole diterpene prenyltransferase janD may then convert paspalinine into shearinine K which is substrate of janO and/or additional enzymes for oxidation and cyclization to generate shearinine A. The chain is FAD-dependent monooxygenase janM from Penicillium janthinellum (Penicillium vitale).